Reading from the N-terminus, the 287-residue chain is Small ribosomal subunit biogenesis GTPase RsgA (287 aa).

In terms of domain architecture, CP-type G spans 63 to 223 (KNLLIRPKVA…VIDTPGFGSL (161 aa)). GTP is bound by residues 113-116 (SKMD) and 166-174 (GQSGVGKST). Zn(2+)-binding residues include C246, C251, H253, and C259.

It belongs to the TRAFAC class YlqF/YawG GTPase family. RsgA subfamily. In terms of assembly, monomer. Associates with 30S ribosomal subunit, binds 16S rRNA. The cofactor is Zn(2+).

Its subcellular location is the cytoplasm. Its function is as follows. One of several proteins that assist in the late maturation steps of the functional core of the 30S ribosomal subunit. Helps release RbfA from mature subunits. May play a role in the assembly of ribosomal proteins into the subunit. Circularly permuted GTPase that catalyzes slow GTP hydrolysis, GTPase activity is stimulated by the 30S ribosomal subunit. The protein is Small ribosomal subunit biogenesis GTPase RsgA of Malacoplasma penetrans (strain HF-2) (Mycoplasma penetrans).